Reading from the N-terminus, the 367-residue chain is ELAV-like protein 3 (367 aa).

3 consecutive RRM domains span residues 39–117 (TNLI…YARP), 125–205 (ANLY…FANN), and 284–362 (WCIF…FKTS).

It belongs to the RRM elav family. As to quaternary structure, interacts with MAP1B light chain LC1. In terms of tissue distribution, brain specific. Expressed in the hippocampus with expression in CA1, CA3 and dentate gyrus.

In terms of biological role, RNA-binding protein that binds to AU-rich element (ARE) sequences of target mRNAs, including VEGF mRNA. May also bind poly-A tracts via RRM 3. May be involved in neuronal differentiation and maintenance. Plays a role in the stabilization of GAP43 mRNA and in spatial learning. The sequence is that of ELAV-like protein 3 (Elavl3) from Mus musculus (Mouse).